We begin with the raw amino-acid sequence, 3148 residues long: Huntingtin (3148 aa).

HEAT repeat units follow at residues 149–186 and 191–228; these read PYLV…ALGH and GEIK…HSRR. Polar residues-rich tracts occupy residues 428–451, 475–486, and 516–526; these read QQPR…SSEQ, SRSSSCGANITP, and PSDSSQTTTEG. 2 disordered regions span residues 428-532 and 557-622; these read QQPR…SAVT and QDEE…NKMS. The span at 602-621 shows a compositional bias: basic and acidic residues; it reads SVDRFIPKDEPPEPEPDNKM. HEAT repeat units follow at residues 760–797 and 861–898; these read LSLV…SLCG and LQER…RLFF. 2 stretches are compositionally biased toward low complexity: residues 1025 to 1042 and 1105 to 1115; these read TLSV…TTSS and SSSSTNTSGGT. Disordered stretches follow at residues 1025-1047, 1098-1117, and 1158-1215; these read TLSV…VDPE, WAGE…GTHK, and GPPV…GSTA. The segment covering 1201 to 1215 has biased composition (polar residues); sequence EANTGRPTESTGSTA. The stretch at 1419–1456 is one HEAT 5 repeat; sequence LFEPLVIKALKQYTTSTSVALQRQVLDLLAQLVQLRVN. A compositionally biased stretch (polar residues) spans 1712 to 1730; it reads PNLSPSDQPAGDGQQNQEP. Disordered stretches follow at residues 1712-1735 and 2072-2091; these read PNLS…GEAQ and VSDT…DGDP. The span at 2072 to 2084 shows a compositional bias: low complexity; the sequence is VSDTSSPSTPVTS. Residues 2398–2407 carry the Nuclear export signal motif; sequence IIISLSRLPL. Positions 2639–2649 are enriched in acidic residues; it reads EWGEDEDDEAD. A disordered region spans residues 2639-2664; the sequence is EWGEDEDDEADPPAPTSPPLSPINSR. A compositionally biased stretch (pro residues) spans 2650-2659; sequence PPAPTSPPLS.

This sequence belongs to the huntingtin family.

It is found in the cytoplasm. The protein resides in the nucleus. In terms of biological role, may play a role in microtubule-mediated transport or vesicle function. This is Huntingtin (htt) from Takifugu rubripes (Japanese pufferfish).